We begin with the raw amino-acid sequence, 124 residues long: Late histone H2A.2.1 (124 aa).

The segment covering 1 to 18 (MSGRGKGAKAKSKAKSRS) has biased composition (basic residues). Positions 1–21 (MSGRGKGAKAKSKAKSRSSRA) are disordered. An N-acetylserine modification is found at Ser-2. Ser-2 is subject to Phosphoserine. Residue Gln-104 is modified to N5-methylglutamine. Lys-119 is covalently cross-linked (Glycyl lysine isopeptide (Lys-Gly) (interchain with G-Cter in ubiquitin)).

This sequence belongs to the histone H2A family. In terms of assembly, the nucleosome is a histone octamer containing two molecules each of H2A, H2B, H3 and H4 assembled in one H3-H4 heterotetramer and two H2A-H2B heterodimers. The octamer wraps approximately 147 bp of DNA. In terms of processing, monoubiquitination of Lys-119 gives a specific tag for epigenetic transcriptional repression. Post-translationally, phosphorylation of Ser-2 directly represses transcription.

It localises to the nucleus. It is found in the chromosome. In terms of biological role, core component of nucleosome. Nucleosomes wrap and compact DNA into chromatin, limiting DNA accessibility to the cellular machineries which require DNA as a template. Histones thereby play a central role in transcription regulation, DNA repair, DNA replication and chromosomal stability. DNA accessibility is regulated via a complex set of post-translational modifications of histones, also called histone code, and nucleosome remodeling. The sequence is that of Late histone H2A.2.1 from Psammechinus miliaris (Green sea urchin).